Reading from the N-terminus, the 178-residue chain is dCTP deaminase (178 aa).

Residues 99-104 (RSTWAR) and Asp-115 contribute to the dCTP site. Residue Glu-125 is the Proton donor/acceptor of the active site. Residues Tyr-157 and Gln-164 each coordinate dCTP.

The protein belongs to the dCTP deaminase family. In terms of assembly, homotrimer.

The enzyme catalyses dCTP + H2O + H(+) = dUTP + NH4(+). The protein operates within pyrimidine metabolism; dUMP biosynthesis; dUMP from dCTP (dUTP route): step 1/2. Its function is as follows. Catalyzes the deamination of dCTP to dUTP. This chain is dCTP deaminase, found in Aeropyrum pernix (strain ATCC 700893 / DSM 11879 / JCM 9820 / NBRC 100138 / K1).